Here is a 122-residue protein sequence, read N- to C-terminus: Mth938 domain-containing protein (122 aa).

The interval 6 to 122 (IASLSWGQMK…RVGGVFHSTC (117 aa)) is MTH138-like domain.

Belongs to the AAMDC family.

Its subcellular location is the cytoplasm. Its function is as follows. May play a role in preadipocyte differentiation and adipogenesis. This is Mth938 domain-containing protein (AAMDC) from Homo sapiens (Human).